The sequence spans 252 residues: Hydroxyacylglutathione hydrolase (252 aa).

Residues H54, H56, D58, H59, H111, D128, and H166 each coordinate Zn(2+).

The protein belongs to the metallo-beta-lactamase superfamily. Glyoxalase II family. Monomer. It depends on Zn(2+) as a cofactor.

It carries out the reaction an S-(2-hydroxyacyl)glutathione + H2O = a 2-hydroxy carboxylate + glutathione + H(+). It participates in secondary metabolite metabolism; methylglyoxal degradation; (R)-lactate from methylglyoxal: step 2/2. Thiolesterase that catalyzes the hydrolysis of S-D-lactoyl-glutathione to form glutathione and D-lactic acid. This Aliivibrio salmonicida (strain LFI1238) (Vibrio salmonicida (strain LFI1238)) protein is Hydroxyacylglutathione hydrolase.